A 310-amino-acid chain; its full sequence is Ribosomal protein uL3 glutamine methyltransferase (310 aa).

It belongs to the protein N5-glutamine methyltransferase family. PrmB subfamily.

It catalyses the reaction L-glutaminyl-[ribosomal protein uL3] + S-adenosyl-L-methionine = N(5)-methyl-L-glutaminyl-[ribosomal protein uL3] + S-adenosyl-L-homocysteine + H(+). Specifically methylates large ribosomal subunit protein uL3 on 'Gln-150'. The protein is Ribosomal protein uL3 glutamine methyltransferase of Salmonella typhi.